The chain runs to 231 residues: RNA pyrophosphohydrolase (231 aa).

The Nudix hydrolase domain maps to 6–149 (GFRPNVGIIL…KRDVYQLALT (144 aa)). Positions 38–59 (GGIKYGETPEQAMYRELHEEIG) match the Nudix box motif. Residues 168–200 (VHHGRHGSGQRYAQQPGQPPTLAQRRPLQPVTQ) are disordered.

Belongs to the Nudix hydrolase family. RppH subfamily. It depends on a divalent metal cation as a cofactor.

Its function is as follows. Accelerates the degradation of transcripts by removing pyrophosphate from the 5'-end of triphosphorylated RNA, leading to a more labile monophosphorylated state that can stimulate subsequent ribonuclease cleavage. The sequence is that of RNA pyrophosphohydrolase from Cupriavidus pinatubonensis (strain JMP 134 / LMG 1197) (Cupriavidus necator (strain JMP 134)).